The following is a 182-amino-acid chain: Ribosome maturation factor RimM (182 aa).

The region spanning 102-182 (EEGDYYWKDL…TIEVDWDPGF (81 aa)) is the PRC barrel domain.

This sequence belongs to the RimM family. In terms of assembly, binds ribosomal protein uS19.

It is found in the cytoplasm. Functionally, an accessory protein needed during the final step in the assembly of 30S ribosomal subunit, possibly for assembly of the head region. Essential for efficient processing of 16S rRNA. May be needed both before and after RbfA during the maturation of 16S rRNA. It has affinity for free ribosomal 30S subunits but not for 70S ribosomes. This Klebsiella pneumoniae (strain 342) protein is Ribosome maturation factor RimM.